Here is a 321-residue protein sequence, read N- to C-terminus: Probable UDP-sugar transporter protein SLC35A4 (321 aa).

The Cytoplasmic segment spans residues 1-22; that stretch reads MYSVNIEPDGSNHSPSRKRLKQ. A helical membrane pass occupies residues 23 to 43; that stretch reads ILWGLMLVLSVTIYGSHAPLI. Topologically, residues 44 to 56 are lumenal; that stretch reads YLCKVNGEIPFSS. A helical transmembrane segment spans residues 57–77; it reads SAVVLLIELSKFVISLVFFLI. Topologically, residues 78–91 are cytoplasmic; the sequence is QDWKSLKASVSWHL. A helical membrane pass occupies residues 92 to 112; the sequence is AAPYAVPAVLYGANNNLVVYI. Residues 113–119 are Lumenal-facing; that stretch reads QHFMDPS. The helical transmembrane segment at 120-140 threads the bilayer; the sequence is SFQVLSNLKIVSTAVLYSLFL. The Cytoplasmic portion of the chain corresponds to 141-149; sequence RQRLSVRRW. Residues 150–170 form a helical membrane-spanning segment; sequence LSVFLLLAAGVFYSYGGIQDL. Topologically, residues 171-180 are lumenal; the sequence is EKVSSDTNLY. The chain crosses the membrane as a helical span at residues 181 to 201; that stretch reads VTLPGLLLMLAYCLISGLSAV. Over 202 to 211 the chain is Cytoplasmic; the sequence is YTEMTLKTQK. Residues 212-232 traverse the membrane as a helical segment; sequence IPLNMQNLYLYSFGIIINLTA. At 233–247 the chain is on the lumenal side; that stretch reads HLTSSKNSDFFDGFS. A helical membrane pass occupies residues 248–268; sequence VWVWVIILSQALNGLIMSLVM. Over 269 to 321 the chain is Cytoplasmic; sequence KLSNNITRLFIISFSMLANGFLSFILFQLQLTALFFLAVVLIGLAVYMYYGMK.

It belongs to the nucleotide-sugar transporter family. SLC35A subfamily.

It localises to the golgi apparatus membrane. It catalyses the reaction CDP-L-ribitol(in) + CDP(out) = CDP-L-ribitol(out) + CDP(in). In terms of biological role, mediates the transport of CDP-ribitol. Does not exhibit CMP-sialic acid, UDP-galactose and UDP-N-acetylglucosamine transport activity. This is Probable UDP-sugar transporter protein SLC35A4 from Xenopus tropicalis (Western clawed frog).